We begin with the raw amino-acid sequence, 217 residues long: RNA chaperone ProQ (217 aa).

Residues glutamate 105–serine 166 form a disordered region. The span at lysine 121–proline 131 shows a compositional bias: basic residues. Positions arginine 132–histidine 162 are enriched in basic and acidic residues.

Belongs to the ProQ family.

The protein localises to the cytoplasm. Its function is as follows. RNA chaperone with significant RNA binding, RNA strand exchange and RNA duplexing activities. May regulate ProP activity through an RNA-based, post-transcriptional mechanism. This chain is RNA chaperone ProQ, found in Escherichia coli O8 (strain IAI1).